A 563-amino-acid chain; its full sequence is Group II intron-interrupted relaxase LtrB (563 aa).

Tyr44 is an active-site residue. Mg(2+) is bound by residues His159 and His161.

It belongs to the mobilization (MOB) protein type 1 family. Mg(2+) serves as cofactor. Mn(2+) is required as a cofactor.

Its function is as follows. Mediates initiation of conjugal transfer possibly by introducing a single-stranded nick at the potential origin of transfer. This is Group II intron-interrupted relaxase LtrB (ltrBE1) from Lactococcus lactis subsp. cremoris (strain MG1363).